Here is a 223-residue protein sequence, read N- to C-terminus: MSDFIPPAMDQMRKNYSLGGLHENDAKSDPLVQFQSWFEEALEDVPNWFEPNAMTLSTSDVSGDITSRIVLLKGVEEKKFLFYTNYDSTKGSQMRANPRVSLCLFWPHCQRQVRIQGTVDKVSREMSETYFHSRPRDSQLGAHVSQQSSVIDSREAMESSLAQLKARYPEGTQIPLPENWGGYAVTPMSFEFWQGRPSRLHDRLVYKRDDADSNDWVMQRLSP.

Residues 13 to 16 (RKNY) and lysine 73 each bind substrate. FMN-binding positions include 68–73 (RIVLLK), 83–84 (YT), lysine 90, and glutamine 112. Tyrosine 130, arginine 134, and serine 138 together coordinate substrate. FMN is bound by residues 147–148 (QS) and tryptophan 193. Position 199 to 201 (199 to 201 (RLH)) interacts with substrate. Arginine 203 is an FMN binding site.

This sequence belongs to the pyridoxamine 5'-phosphate oxidase family. Homodimer. Requires FMN as cofactor.

It carries out the reaction pyridoxamine 5'-phosphate + O2 + H2O = pyridoxal 5'-phosphate + H2O2 + NH4(+). It catalyses the reaction pyridoxine 5'-phosphate + O2 = pyridoxal 5'-phosphate + H2O2. Its pathway is cofactor metabolism; pyridoxal 5'-phosphate salvage; pyridoxal 5'-phosphate from pyridoxamine 5'-phosphate: step 1/1. It participates in cofactor metabolism; pyridoxal 5'-phosphate salvage; pyridoxal 5'-phosphate from pyridoxine 5'-phosphate: step 1/1. Catalyzes the oxidation of either pyridoxine 5'-phosphate (PNP) or pyridoxamine 5'-phosphate (PMP) into pyridoxal 5'-phosphate (PLP). The sequence is that of Pyridoxine/pyridoxamine 5'-phosphate oxidase from Rhodopirellula baltica (strain DSM 10527 / NCIMB 13988 / SH1).